The sequence spans 1230 residues: Cullin-associated NEDD8-dissociated protein 1 (1230 aa).

Alanine 2 carries the N-acetylalanine modification. HEAT repeat units lie at residues alanine 2–isoleucine 39, aspartate 44–glutamate 81, glutamine 83–proline 119, cysteine 131–glutamine 165, asparagine 171–asparagine 208, valine 210–histidine 247, arginine 248–phenylalanine 282, glutamate 289–glutamate 366, glutamate 370–proline 407, proline 424–glycine 467, glutamine 471–proline 510, and proline 515–proline 552. Residues aspartate 315–aspartate 344 form a disordered region. Serine 335 carries the post-translational modification Phosphoserine. Residue serine 558 is modified to Phosphoserine. HEAT repeat units lie at residues proline 563–aspartate 602, proline 606–aspartate 643, proline 646–aspartate 683, alanine 688–serine 725, lysine 729–asparagine 768, leucine 770–arginine 808, alanine 809–valine 845, serine 852–proline 889, glutamate 890–proline 927, tyrosine 928–leucine 960, isoleucine 961–glutamine 998, proline 1002–serine 1039, aspartate 1043–leucine 1097, arginine 1099–leucine 1133, and glutamine 1140–alanine 1189. Lysine 971 carries the N6-acetyllysine modification.

It belongs to the CAND family. As to quaternary structure, interacts with TBP. Part of a complex that contains CUL1 and RBX1. Interacts with unneddylated cullins: interacts with CUL1, CUL2, CUL3, CUL4A, CUL4B and CUL5. Does not bind neddylated CUL1. Interaction with cullins is abolished in presence of COMMD1, which antagonizes with CAND1 for interacting with cullins. Interacts with ERCC6. Interacts with DCUN1D1, DCUN1D2, DCUN1D3, DCUN1D4 and DCUN1D5; these interactions are bridged by cullins and strongly inhibits the neddylation of cullins.

It is found in the cytoplasm. The protein resides in the nucleus. Its function is as follows. Key assembly factor of SCF (SKP1-CUL1-F-box protein) E3 ubiquitin ligase complexes that promotes the exchange of the substrate-recognition F-box subunit in SCF complexes, thereby playing a key role in the cellular repertoire of SCF complexes. Acts as a F-box protein exchange factor. The exchange activity of CAND1 is coupled with cycles of neddylation conjugation: in the deneddylated state, cullin-binding CAND1 binds CUL1-RBX1, increasing dissociation of the SCF complex and promoting exchange of the F-box protein. Probably plays a similar role in other cullin-RING E3 ubiquitin ligase complexes. The chain is Cullin-associated NEDD8-dissociated protein 1 (Cand1) from Mus musculus (Mouse).